A 412-amino-acid polypeptide reads, in one-letter code: Non-specific lipid-transfer protein-like 2 (412 aa).

Positions 410–412 (SKI) match the Microbody targeting signal motif.

The protein belongs to the thiolase-like superfamily. Thiolase family. Expressed in intestine, hypodermis and body-wall muscle.

The protein localises to the peroxisome. The catalysed reaction is choloyl-CoA + propanoyl-CoA = 3alpha,7alpha,12alpha-trihydroxy-24-oxo-5beta-cholestan-26-oyl-CoA + CoA. Its activity is regulated as follows. Inhibited by acetyl-CoA. In terms of biological role, catalyzes the thiolytic cleavage of 3-ketoacyl-CoA with 8-16 carbon residues in the acyl group using a ping-pong mechanism whereby binding to 3-ketooctanoyl-CoA results in the release of acetyl-CoA and the subsequent addition of CoA produces 3-ketohexanohyl-CoA. Involved in the biosynthesis of the dauer pheromone by providing short chains of fatty acid that are attached to the ascarylose sugars of the pheromone. This Caenorhabditis elegans protein is Non-specific lipid-transfer protein-like 2.